The chain runs to 565 residues: Sulfite reductase [NADPH] hemoprotein beta-component (565 aa).

Positions 429, 435, 474, and 478 each coordinate [4Fe-4S] cluster. Residue Cys-478 participates in siroheme binding.

Belongs to the nitrite and sulfite reductase 4Fe-4S domain family. As to quaternary structure, alpha(8)-beta(8). The alpha component is a flavoprotein, the beta component is a hemoprotein. Siroheme is required as a cofactor. [4Fe-4S] cluster serves as cofactor.

It carries out the reaction hydrogen sulfide + 3 NADP(+) + 3 H2O = sulfite + 3 NADPH + 4 H(+). It participates in sulfur metabolism; hydrogen sulfide biosynthesis; hydrogen sulfide from sulfite (NADPH route): step 1/1. Functionally, component of the sulfite reductase complex that catalyzes the 6-electron reduction of sulfite to sulfide. This is one of several activities required for the biosynthesis of L-cysteine from sulfate. This is Sulfite reductase [NADPH] hemoprotein beta-component from Shewanella oneidensis (strain ATCC 700550 / JCM 31522 / CIP 106686 / LMG 19005 / NCIMB 14063 / MR-1).